Here is a 278-residue protein sequence, read N- to C-terminus: E3 ubiquitin-protein ligase MARCHF5 (278 aa).

The RING-CH-type zinc finger occupies 6–75; that stretch reads LQQMLDRSCW…PQCNAEYLIV (70 aa). Residues Cys14, Cys17, Cys33, Cys35, His43, Cys46, Cys65, and Cys68 each coordinate Zn(2+). The next 4 helical transmembrane spans lie at 99-119, 139-159, 209-229, and 238-258; these read FAAA…YGAV, PLFL…GKMI, ILCG…LMFS, and TILG…YFKQ.

As to quaternary structure, monomer and homodimer. Interacts with MFN1, MFN2, DNM1L and FIS1. Autoubiquitinated leading to degradation (short half-life).

The protein localises to the mitochondrion outer membrane. The catalysed reaction is S-ubiquitinyl-[E2 ubiquitin-conjugating enzyme]-L-cysteine + [acceptor protein]-L-lysine = [E2 ubiquitin-conjugating enzyme]-L-cysteine + N(6)-ubiquitinyl-[acceptor protein]-L-lysine.. Its pathway is protein modification; protein ubiquitination. Mitochondrial E3 ubiquitin-protein ligase that plays a crucial role in the control of mitochondrial morphology by acting as a positive regulator of mitochondrial fission and as an important regulator of immune response. Plays a crucial role in maintaining mitochondrial homeostasis by regulating the dynamics of mitochondria through the ubiquitination of key proteins involved in fission and fusion such as FIS1, DNM1L and MFN1. Acts as a critical determinant of mitotic apoptosis through both MCL1-dependent and -independent pathways. Turns off persistent immune signaling by degrading oligomeric complexes of retinoic acid-inducible gene I/DDX58 and mitochondrial antiviral-signaling protein/MAVS formed upon RNA virus infection. Promotes STING-mediated type-I interferon production via 'Lys-63'-linked ubiquitination of STING1 thereby preserving its activity and preventing the formation of inactive STING1 polymers. Plays also an essential role in the formation of PEX3-containing vesicles in the de novo biogenesis of peroxisomes from mitochondria. Acts as a regulator of NLRP3 inflammasome activation on the mitochondria by mediating the 'Lys-27'-linked polyubiquitination of NLRP3, positively regulating the NLRP3-NEK7 complex formation and NLRP3 oligomerization. In Bos taurus (Bovine), this protein is E3 ubiquitin-protein ligase MARCHF5 (MARCHF5).